The following is a 117-amino-acid chain: Large ribosomal subunit protein uL22 (117 aa).

It belongs to the universal ribosomal protein uL22 family. In terms of assembly, part of the 50S ribosomal subunit.

In terms of biological role, this protein binds specifically to 23S rRNA; its binding is stimulated by other ribosomal proteins, e.g. L4, L17, and L20. It is important during the early stages of 50S assembly. It makes multiple contacts with different domains of the 23S rRNA in the assembled 50S subunit and ribosome. Functionally, the globular domain of the protein is located near the polypeptide exit tunnel on the outside of the subunit, while an extended beta-hairpin is found that lines the wall of the exit tunnel in the center of the 70S ribosome. The polypeptide is Large ribosomal subunit protein uL22 (Leptospira biflexa serovar Patoc (strain Patoc 1 / ATCC 23582 / Paris)).